A 287-amino-acid chain; its full sequence is Aquaporin PIP1-2 (287 aa).

The tract at residues 1-37 is disordered; that stretch reads MEGKEEDVRLGANKFTERQPIGTAAQSQDKDYKEPPP. Topologically, residues 1–55 are cytoplasmic; sequence MEGKEEDVRLGANKFTERQPIGTAAQSQDKDYKEPPPAPLFEPGELSSWSFYRAG. A helical transmembrane segment spans residues 56 to 76; sequence IAEFVATFLFLYITILTVMGV. The Extracellular portion of the chain corresponds to 77–89; that stretch reads VKSSTKCSTVGIQ. The helical transmembrane segment at 90 to 110 threads the bilayer; it reads GIAWAFGGMIFALVYCTAGIS. The Cytoplasmic portion of the chain corresponds to 111-133; the sequence is GGHINPAVTFGLFLARKLSLTRA. The NPA 1 motif lies at 115 to 117; sequence NPA. Residues 134–154 traverse the membrane as a helical segment; the sequence is LFYMVMQCLGAICGAGVVKGF. Residues 155-175 lie on the Extracellular side of the membrane; the sequence is QKGLYENNGGGANVVAPGYTK. A helical membrane pass occupies residues 176-196; sequence GDGLGAEIVGTFILVYTVFSA. Over 197–209 the chain is Cytoplasmic; that stretch reads TDAKRSARDSHVP. The helical transmembrane segment at 210–230 threads the bilayer; that stretch reads ILAPLPIGFAVFLVHLATIPI. At 231–257 the chain is on the extracellular side; the sequence is TGTGINPARSLGAAIIYNKGHAWDDHW. An NPA 2 motif is present at residues 236 to 238; the sequence is NPA. The chain crosses the membrane as a helical span at residues 258 to 278; that stretch reads IFWVGPFIGAALAALYHQVVI. The Cytoplasmic portion of the chain corresponds to 279–287; that stretch reads RAIPFKSRS.

Belongs to the MIP/aquaporin (TC 1.A.8) family. PIP (TC 1.A.8.11) subfamily. In terms of tissue distribution, barely detectable in roots, leaves and fruits.

Its subcellular location is the cell membrane. Water channel required to facilitate the transport of water across cell membrane; mercury-insensitive. Contributes to the tolerance to multiple abiotic stresses including salt (NaCl), cold and water deprivation, by modulating cytosolic K(+)/Na(+) ratio, maintaining osmotic balance, and reducing membrane injury (e.g. oxidative injury). The chain is Aquaporin PIP1-2 from Musa acuminata subsp. malaccensis (Wild banana).